Consider the following 40-residue polypeptide: Amyloid-beta precursor protein (40 aa).

It belongs to the APP family. In terms of assembly, binds, via its C-terminus, to the PID domain of several cytoplasmic proteins, including APBB family members, the APBA family, MAPK8IP1, SHC1 and NUMB and DAB1. Binding to DAB1 inhibits its serine phosphorylation. Interacts (via NPXY motif) with DAB2 (via PID domain); the interaction is impaired by tyrosine phosphorylation of the NPXY motif. Also interacts with GPCR-like protein BPP, APPBP1, IB1, KNS2 (via its TPR domains), APPBP2 (via BaSS) and DDB1. In vitro, it binds MAPT via the MT-binding domains. Associates with microtubules in the presence of ATP and in a kinesin-dependent manner. Interacts, through a C-terminal domain, with GNAO1. Interacts with CPEB1, ANKS1B and AGER. Interacts with ITM2B. Interacts with ITM2C. Interacts with IDE. Can form homodimers; dimerization is enhanced in the presence of Cu(2+) ions. Can form homodimers; this is promoted by heparin binding. Interacts with SORL1 (via N-terminal ectodomain); this interaction retains APP in the trans-Golgi network and reduces processing into soluble APP-alpha and amyloid-beta peptides. Interacts with PLD3. Interacts with VDAC1. Interacts with NSG1; could regulate APP processing. Interacts with LRRK2. Interacts (via cytoplasmic domain) with KIF5B. Interacts (via C-terminus) with APBB2/FE65L1 (via C-terminus). Interacts (via intracellular domain) with APBB3. Post-translationally, proteolytically processed under normal cellular conditions. Cleavage either by alpha-secretase, beta-secretase or theta-secretase leads to generation and extracellular release of soluble APP peptides, S-APP-alpha and S-APP-beta, and the retention of corresponding membrane-anchored C-terminal fragments, C80, C83 and C99. Subsequent processing of C80 and C83 by gamma-secretase yields P3 peptides. This is the major secretory pathway and is non-amyloidogenic. Alternatively, presenilin/nicastrin-mediated gamma-secretase processing of C99 releases the amyloid-beta proteins, amyloid-beta protein 40 and amyloid-beta protein 42, major components of amyloid plaques, and the cytotoxic C-terminal fragments, gamma-CTF(50), gamma-CTF(57) and gamma-CTF(59). PSEN1 cleavage is more efficient with C83 than with C99 as substrate (in vitro). Amyloid-beta protein 40 and Amyloid-beta protein 42 are cleaved by ACE. Many other minor amyloid-beta peptides, amyloid-beta 1-X peptides, are found in cerebral spinal fluid (CSF) including the amyloid-beta X-15 peptides, produced from the cleavage by alpha-secretase.

The protein localises to the cell membrane. It localises to the membrane. Its subcellular location is the perikaryon. It is found in the cell projection. The protein resides in the growth cone. The protein localises to the clathrin-coated pit. It localises to the early endosome. Its subcellular location is the cytoplasmic vesicle. In terms of biological role, functions as a cell surface receptor and performs physiological functions on the surface of neurons relevant to neurite growth, neuronal adhesion and axonogenesis. Interaction between APP molecules on neighboring cells promotes synaptogenesis. Involved in cell mobility and transcription regulation through protein-protein interactions. Can promote transcription activation through binding to APBB1-KAT5 and inhibit Notch signaling through interaction with Numb. Couples to apoptosis-inducing pathways such as those mediated by G(o) and JIP. Inhibits G(o)-alpha ATPase activity. Acts as a kinesin I membrane receptor, mediating the axonal transport of beta-secretase and presenilin 1. May be involved in copper homeostasis/oxidative stress through copper ion reduction. In vitro, copper-metallated APP induces neuronal death directly or is potentiated through Cu(2+)-mediated low-density lipoprotein oxidation. Can regulate neurite outgrowth through binding to components of the extracellular matrix such as heparin and collagen I and IV. Induces a AGER-dependent pathway that involves activation of p38 MAPK, resulting in internalization of amyloid-beta peptide and mitochondrial dysfunction in cultured cortical neurons. Provides Cu(2+) ions for GPC1 which are required for release of nitric oxide (NO) and subsequent degradation of the heparan sulfate chains on GPC1. The chain is Amyloid-beta precursor protein from Felis catus (Cat).